Here is an 895-residue protein sequence, read N- to C-terminus: Collagen alpha-1(I) chain (895 aa).

Residues 1–895 (GPMGPSGPRG…PGPIGPPGPR (895 aa)) form a disordered region. Residues 20-39 (PQGFQGPPGEPGEPGASGPM) are compositionally biased toward low complexity. Residues 51 to 65 (NGDDGEAGKPGRPGE) show a composition bias toward basic and acidic residues. At Ser90 the chain carries Phosphoserine. 2 stretches are compositionally biased toward low complexity: residues 98–114 (DAGP…PGEN) and 137–150 (PAGA…TGAA). Residues 152 to 164 (PPGPTGPAGPPGF) show a composition bias toward pro residues. Composition is skewed to low complexity over residues 198–237 (AGAA…RGPS), 302–336 (ERGF…PGEA), 348–374 (KGIT…QDGR), 383–399 (ARGQ…KGAA), 553–564 (TGPSGPAGPTGA), and 575–593 (AGFA…KGDA). Ser556 is subject to Phosphoserine. The segment covering 595–607 (PPGPAGPAGPPGP) has biased composition (pro residues). Composition is skewed to low complexity over residues 608–635 (IGSV…AGRV), 660–669 (ETGPAGRPGE), and 679–703 (AGEK…QGIA). A compositionally biased stretch (pro residues) spans 741 to 751 (PPGPVGPPGIA). Residues 753–768 (PPGESGREGSPGAEGS) are compositionally biased toward low complexity. Residues 787–802 (AGPPGAPGAPGAPGPV) are compositionally biased toward pro residues. 2 stretches are compositionally biased toward low complexity: residues 823–838 (IGPV…QGPR) and 853–886 (PGEQ…NGIP).

Belongs to the fibrillar collagen family. Trimers of one alpha 2(I) and two alpha 1(I) chains. Prolines at the third position of the tripeptide repeating unit (G-X-Y) are hydroxylated in some or all of the chains. As to expression, forms the fibrils of tendon, ligaments and bones. In bones, the fibrils are mineralized with calcium hydroxyapatite.

It is found in the secreted. It localises to the extracellular space. The protein resides in the extracellular matrix. Type I collagen is a member of group I collagen (fibrillar forming collagen). The protein is Collagen alpha-1(I) chain of Equus sp.